We begin with the raw amino-acid sequence, 1194 residues long: Chitin synthase C (1194 aa).

2 disordered regions span residues 1-91 (MSLP…PNYL) and 136-177 (GAHG…RRKA). A compositionally biased stretch (basic and acidic residues) spans 12-23 (PRREETSAFREP). Basic residues predominate over residues 42-54 (PRHHRHHRSHSSR). 2 stretches are compositionally biased toward basic and acidic residues: residues 55–69 (HQHDIDEERAEEGGI) and 76–85 (VKPERGRMDP). The segment covering 150-164 (TRHRSKKRKGSRKIS) has biased composition (basic residues). The helical transmembrane segment at 221-241 (IGLISIILMIAAFVGFLTFGF) threads the bilayer. N351 and N390 each carry an N-linked (GlcNAc...) asparagine glycan. The helical transmembrane segment at 476-496 (YVSLIFILSIVIVKFAFALLF) threads the bilayer. N582, N608, N885, and N1014 each carry an N-linked (GlcNAc...) asparagine glycan. 3 consecutive transmembrane segments (helical) span residues 1039–1059 (FVIFVELVGTVVLPAAISFTI), 1073–1093 (IIPLVLLALILGLPGVLVVVT), and 1097–1117 (LVYVLWMLVYLISLPIWNFVL).

The protein belongs to the chitin synthase family. Class V subfamily.

The protein localises to the cell membrane. The catalysed reaction is [(1-&gt;4)-N-acetyl-beta-D-glucosaminyl](n) + UDP-N-acetyl-alpha-D-glucosamine = [(1-&gt;4)-N-acetyl-beta-D-glucosaminyl](n+1) + UDP + H(+). Polymerizes chitin, a structural polymer of the cell wall and septum, by transferring the sugar moiety of UDP-GlcNAc to the non-reducing end of the growing chitin polymer. Responsible for synthesis of 30-40% of the chitin in the cells. ChsA and chsD play redundant functions in conidia formation. The chitin synthesized by the chsD-encoded isozyme contributes to the rigidity of the walls of germinating conidia, of the subapical region of hyphae, and of conidiophore vesicles, but is not necessary for normal morphology of these cells. In Emericella nidulans (strain FGSC A4 / ATCC 38163 / CBS 112.46 / NRRL 194 / M139) (Aspergillus nidulans), this protein is Chitin synthase C.